The sequence spans 668 residues: DNA mismatch repair protein MutL (668 aa).

Belongs to the DNA mismatch repair MutL/HexB family.

In terms of biological role, this protein is involved in the repair of mismatches in DNA. It is required for dam-dependent methyl-directed DNA mismatch repair. May act as a 'molecular matchmaker', a protein that promotes the formation of a stable complex between two or more DNA-binding proteins in an ATP-dependent manner without itself being part of a final effector complex. This chain is DNA mismatch repair protein MutL, found in Limosilactobacillus reuteri (strain DSM 20016) (Lactobacillus reuteri).